The primary structure comprises 568 residues: Urease subunit alpha (568 aa).

A Urease domain is found at G131 to Y568. Positions 136, 138, and 219 each coordinate Ni(2+). The residue at position 219 (K219) is an N6-carboxylysine. Position 221 (H221) interacts with substrate. Residues H248 and H274 each coordinate Ni(2+). H322 acts as the Proton donor in catalysis. D362 lines the Ni(2+) pocket.

Belongs to the metallo-dependent hydrolases superfamily. Urease alpha subunit family. In terms of assembly, heterotrimer of UreA (gamma), UreB (beta) and UreC (alpha) subunits. Three heterotrimers associate to form the active enzyme. The cofactor is Ni cation. In terms of processing, carboxylation allows a single lysine to coordinate two nickel ions.

It localises to the cytoplasm. The catalysed reaction is urea + 2 H2O + H(+) = hydrogencarbonate + 2 NH4(+). It functions in the pathway nitrogen metabolism; urea degradation; CO(2) and NH(3) from urea (urease route): step 1/1. The sequence is that of Urease subunit alpha from Cereibacter sphaeroides (strain ATCC 17025 / ATH 2.4.3) (Rhodobacter sphaeroides).